Reading from the N-terminus, the 178-residue chain is Translation initiation factor IF-3 (178 aa).

It belongs to the IF-3 family. Monomer.

The protein localises to the cytoplasm. In terms of biological role, IF-3 binds to the 30S ribosomal subunit and shifts the equilibrium between 70S ribosomes and their 50S and 30S subunits in favor of the free subunits, thus enhancing the availability of 30S subunits on which protein synthesis initiation begins. In Nautilia profundicola (strain ATCC BAA-1463 / DSM 18972 / AmH), this protein is Translation initiation factor IF-3.